Reading from the N-terminus, the 121-residue chain is Large ribosomal subunit protein bL12 (121 aa).

This sequence belongs to the bacterial ribosomal protein bL12 family. As to quaternary structure, homodimer. Part of the ribosomal stalk of the 50S ribosomal subunit. Forms a multimeric L10(L12)X complex, where L10 forms an elongated spine to which 2 to 4 L12 dimers bind in a sequential fashion. Binds GTP-bound translation factors.

Its function is as follows. Forms part of the ribosomal stalk which helps the ribosome interact with GTP-bound translation factors. Is thus essential for accurate translation. The sequence is that of Large ribosomal subunit protein bL12 from Acinetobacter baylyi (strain ATCC 33305 / BD413 / ADP1).